A 337-amino-acid chain; its full sequence is Nicotinate-nucleotide--dimethylbenzimidazole phosphoribosyltransferase (337 aa).

Glutamate 305 serves as the catalytic Proton acceptor.

Belongs to the CobT family.

It carries out the reaction 5,6-dimethylbenzimidazole + nicotinate beta-D-ribonucleotide = alpha-ribazole 5'-phosphate + nicotinate + H(+). It participates in nucleoside biosynthesis; alpha-ribazole biosynthesis; alpha-ribazole from 5,6-dimethylbenzimidazole: step 1/2. Its function is as follows. Catalyzes the synthesis of alpha-ribazole-5'-phosphate from nicotinate mononucleotide (NAMN) and 5,6-dimethylbenzimidazole (DMB). In Jannaschia sp. (strain CCS1), this protein is Nicotinate-nucleotide--dimethylbenzimidazole phosphoribosyltransferase.